Consider the following 75-residue polypeptide: Small ribosomal subunit protein bS18 (75 aa).

Belongs to the bacterial ribosomal protein bS18 family. Part of the 30S ribosomal subunit. Forms a tight heterodimer with protein bS6.

Its function is as follows. Binds as a heterodimer with protein bS6 to the central domain of the 16S rRNA, where it helps stabilize the platform of the 30S subunit. This Shewanella baltica (strain OS223) protein is Small ribosomal subunit protein bS18.